Consider the following 275-residue polypeptide: NH(3)-dependent NAD(+) synthetase (275 aa).

46-53 (GISGGQDS) lines the ATP pocket. Aspartate 52 lines the Mg(2+) pocket. Deamido-NAD(+) is bound at residue arginine 140. An ATP-binding site is contributed by threonine 160. Position 165 (glutamate 165) interacts with Mg(2+). Residues lysine 173 and aspartate 180 each coordinate deamido-NAD(+). The ATP site is built by lysine 189 and threonine 211. A deamido-NAD(+)-binding site is contributed by 260–261 (HK).

Belongs to the NAD synthetase family. As to quaternary structure, homodimer.

It carries out the reaction deamido-NAD(+) + NH4(+) + ATP = AMP + diphosphate + NAD(+) + H(+). It participates in cofactor biosynthesis; NAD(+) biosynthesis; NAD(+) from deamido-NAD(+) (ammonia route): step 1/1. In terms of biological role, catalyzes the ATP-dependent amidation of deamido-NAD to form NAD. Uses ammonia as a nitrogen source. This Shigella dysenteriae serotype 1 (strain Sd197) protein is NH(3)-dependent NAD(+) synthetase.